Here is a 297-residue protein sequence, read N- to C-terminus: PAK4-inhibitor INKA2 (297 aa).

Disordered stretches follow at residues G82 to R109, L175 to L200, and T234 to S285. A compositionally biased stretch (low complexity) spans S92–S102. The segment at E137–E180 is inka box. Positions R244–L253 are enriched in basic residues.

This sequence belongs to the INKA family. As to quaternary structure, interacts with PAK4.

The protein localises to the nucleus. Its function is as follows. Inhibitor of the serine/threonine-protein kinase PAK4. Acts by binding PAK4 in a substrate-like manner, inhibiting the protein kinase activity. The polypeptide is PAK4-inhibitor INKA2 (Homo sapiens (Human)).